A 157-amino-acid chain; its full sequence is Small ribosomal subunit protein uS7 (157 aa).

The protein belongs to the universal ribosomal protein uS7 family. Part of the 30S ribosomal subunit. Contacts proteins S9 and S11.

Its function is as follows. One of the primary rRNA binding proteins, it binds directly to 16S rRNA where it nucleates assembly of the head domain of the 30S subunit. Is located at the subunit interface close to the decoding center, probably blocks exit of the E-site tRNA. In Leptospira interrogans serogroup Icterohaemorrhagiae serovar copenhageni (strain Fiocruz L1-130), this protein is Small ribosomal subunit protein uS7.